A 940-amino-acid polypeptide reads, in one-letter code: Mitogen-activated protein kinase kinase kinase 10 (940 aa).

The 66-residue stretch at 16–81 (PAGPVWTAVF…PSNYVAPAAP (66 aa)) folds into the SH3 domain. Residues 98-360 (LQLEEIIGVG…GSILKQLEVI (263 aa)) form the Protein kinase domain. ATP contacts are provided by residues 104-112 (IGVGGFGKV) and Lys125. The Proton acceptor role is filled by Asp222. At Thr258 the chain carries Phosphothreonine; by autocatalysis. Residue Ser262 is modified to Phosphoserine; by autocatalysis and MAP4K1. 2 leucine-zipper regions span residues 384–405 (IQHM…EEEL) and 419–440 (LRRR…ELHL). Disordered regions lie at residues 490 to 599 (PTLD…MAPG), 687 to 734 (RAGD…GLAP), and 749 to 917 (STRS…QPTL). 3 positions are modified to phosphoserine: Ser498, Ser502, and Ser506. Residues 501 to 511 (ASPPASPSIIP) are compositionally biased toward low complexity. Thr552 is modified (phosphothreonine). Basic and acidic residues-rich tracts occupy residues 560–572 (QKER…RLKA) and 687–698 (RAGDGEEQRRWL). Pro residues predominate over residues 765–775 (APSPPPSPLAP). Residues 822 to 840 (LRQREPLELTNHGPRDPLD) are compositionally biased toward basic and acidic residues. Arg843 is modified (omega-N-methylarginine). Residues 899–913 (PSRPDTPESPGPPSV) are compositionally biased toward pro residues.

It belongs to the protein kinase superfamily. STE Ser/Thr protein kinase family. MAP kinase kinase kinase subfamily. Homodimer. Interacts with SH3RF2. It depends on Mg(2+) as a cofactor. Autophosphorylation on serine and threonine residues within the activation loop plays a role in enzyme activation.

It carries out the reaction L-seryl-[protein] + ATP = O-phospho-L-seryl-[protein] + ADP + H(+). The enzyme catalyses L-threonyl-[protein] + ATP = O-phospho-L-threonyl-[protein] + ADP + H(+). With respect to regulation, homodimerization via the leucine zipper domains is required for autophosphorylation and subsequent activation. Activates the JUN N-terminal pathway. The protein is Mitogen-activated protein kinase kinase kinase 10 (Map3k10) of Mus musculus (Mouse).